A 263-amino-acid polypeptide reads, in one-letter code: Nuclear egress protein 2 (263 aa).

At 1–235 (MASGKKLIDQ…STSLTGRCPS (235 aa)) the chain is on the perinuclear space side. Residues 236–256 (WGAACALLLLSLAVGLMAILA) traverse the membrane as a helical segment. Residues 257–263 (AKLMQWP) are Nuclear-facing.

This sequence belongs to the herpesviridae NEC2 protein family. As to quaternary structure, forms a heterohexameric complex with NEC1. In terms of processing, phosphorylated.

The protein resides in the host nucleus inner membrane. Functionally, plays an essential role in virion nuclear egress, the first step of virion release from infected cell. Within the host nucleus, NEC1 interacts with the newly formed capsid through the vertexes and directs it to the inner nuclear membrane by associating with NEC2. Induces the budding of the capsid at the inner nuclear membrane as well as its envelopment into the perinuclear space. There, the NEC1/NEC2 complex promotes the fusion of the enveloped capsid with the outer nuclear membrane and the subsequent release of the viral capsid into the cytoplasm where it will reach the secondary budding sites in the host Golgi or trans-Golgi network. The chain is Nuclear egress protein 2 from Connochaetes taurinus (Blue wildebeest).